The sequence spans 119 residues: Basic phospholipase A2 homolog 1 (119 aa).

7 disulfide bridges follow: Cys-11–Cys-72, Cys-27–Cys-118, Cys-29–Cys-45, Cys-44–Cys-99, Cys-51–Cys-92, Cys-61–Cys-85, and Cys-79–Cys-90. Residues 107–117 (KENYNIDPKKR) are important for membrane-damaging activities in eukaryotes and bacteria; heparin-binding.

Belongs to the phospholipase A2 family. Group I subfamily. D49 sub-subfamily. Expressed by the venom gland.

Its subcellular location is the secreted. The protein is Basic phospholipase A2 homolog 1 of Notechis scutatus scutatus (Mainland tiger snake).